Reading from the N-terminus, the 479-residue chain is GTPase Obg (479 aa).

The 158-residue stretch at 2–159 (TTFVDRVELH…QDIVLELKTV (158 aa)) folds into the Obg domain. The disordered stretch occupies residues 61–87 (HHKPHRSATNGKPGEGGNRSGKDGQDL). The 172-residue stretch at 160–331 (ADVALVGYPS…LSFALAELVG (172 aa)) folds into the OBG-type G domain. GTP is bound by residues 166-173 (GYPSAGKS), 191-195 (FTTLV), 212-215 (DVPG), 283-286 (NKID), and 312-314 (SAV). Serine 173 and threonine 193 together coordinate Mg(2+). Residues 349–431 (PKAVDDAGFT…DNAVVFDWEP (83 aa)) form the OCT domain. Basic and acidic residues predominate over residues 440-453 (LGRRGEDHRLDEPR). The disordered stretch occupies residues 440–479 (LGRRGEDHRLDEPRPAAQRRRDKQAERDDAEKEYDDFEPF). Over residues 470 to 479 (EKEYDDFEPF) the composition is skewed to acidic residues.

This sequence belongs to the TRAFAC class OBG-HflX-like GTPase superfamily. OBG GTPase family. In terms of assembly, monomer. Mg(2+) is required as a cofactor.

Its subcellular location is the cytoplasm. In terms of biological role, an essential GTPase which binds GTP, GDP and possibly (p)ppGpp with moderate affinity, with high nucleotide exchange rates and a fairly low GTP hydrolysis rate. Plays a role in control of the cell cycle, stress response, ribosome biogenesis and in those bacteria that undergo differentiation, in morphogenesis control. This Streptomyces avermitilis (strain ATCC 31267 / DSM 46492 / JCM 5070 / NBRC 14893 / NCIMB 12804 / NRRL 8165 / MA-4680) protein is GTPase Obg.